Here is a 388-residue protein sequence, read N- to C-terminus: Chalcone synthase (388 aa).

Residue C164 is part of the active site.

Belongs to the thiolase-like superfamily. Chalcone/stilbene synthases family.

It carries out the reaction (E)-4-coumaroyl-CoA + 3 malonyl-CoA + 3 H(+) = 2',4,4',6'-tetrahydroxychalcone + 3 CO2 + 4 CoA. Its pathway is secondary metabolite biosynthesis; flavonoid biosynthesis. Its function is as follows. The primary product of this enzyme is 4,2',4',6'-tetrahydroxychalcone (also termed naringenin-chalcone or chalcone) which can under specific conditions spontaneously isomerize into naringenin. The chain is Chalcone synthase (CHS) from Vigna unguiculata (Cowpea).